The sequence spans 560 residues: MTILPKKKPNSSVGVSDHPDDPDRRTGSDPHQHQHQHSHGVRPGARPRASPPPWSYQAAPPASREDRRTESSSRPQQASPPPVGAGSSGGPGDATGMACVSGNRAELSGGVGCGGGMGGCCSGPGLSKRRRQATCSGGVAGGGTGPGAAGGGGGGGGGGGVGGPSPEQEEGAGYNSEDEYENASRLQSEDPATVEQQEHWFEKALQEKKGFVIKKMKEDGACLFRAVADQVYGDQDMHEVVRKHCMDYLMKNADYFSNYVTEDFTTYINRKRKNNCHGNHIEMQAMAEMYNRPVEVYQSGTEPINTFHGIHQNNDEPIRVSYHRNIHYNSVVNPNKATIGVGLGLPAFKPGFADQSLMKNAIKTSEESWIEQQMLEDKKRATDWEATNEAIEEQVARESYLQWLRDQEKQARQPRKASATCSSATAAASSGLEEWNARSPRQRSSAPSPEIPDPAHSDTAAKPPSPAGALALSKPPSPCAPGPSNQACVGPDRPTSSSLVSLYPALGYRAIMQEMSPTAFGLTDWEDDEILASVLAVSQQEYLDSMKKNAMHREPSPDSS.

Disordered regions lie at residues methionine 1 to valine 100 and glycine 141 to aspartate 190. A compositionally biased stretch (basic and acidic residues) spans aspartate 17–glutamine 32. Over residues glycine 141–glycine 163 the composition is skewed to gly residues. Residues phenylalanine 211–proline 334 form the OTU domain. The tract at residues methionine 216–cysteine 222 is cys-loop. Residue aspartate 219 is part of the active site. Cysteine 222 acts as the Nucleophile in catalysis. The interval lysine 271–isoleucine 281 is variable-loop. The tract at residues tyrosine 322 to histidine 327 is his-loop. The active site involves histidine 327. Residues alanine 411–serine 496 form a disordered region. 2 stretches are compositionally biased toward low complexity: residues alanine 417 to serine 430 and alanine 437 to serine 448.

This sequence belongs to the peptidase C85 family.

The catalysed reaction is Thiol-dependent hydrolysis of ester, thioester, amide, peptide and isopeptide bonds formed by the C-terminal Gly of ubiquitin (a 76-residue protein attached to proteins as an intracellular targeting signal).. Its function is as follows. Deubiquitinating enzyme that may function as negative regulator of the innate immune system. Has peptidase activity towards 'Lys-48'- and 'Lys-63'-linked polyubiquitin chains. Can also cleave 'Lys-11'-linked ubiquitin chains (in vitro). This Danio rerio (Zebrafish) protein is OTU domain-containing protein 5-A (otud5a).